A 213-amino-acid chain; its full sequence is Thiamine-phosphate synthase (213 aa).

4-amino-2-methyl-5-(diphosphooxymethyl)pyrimidine contacts are provided by residues 40 to 44 and asparagine 75; that span reads QFREK. Residues aspartate 76 and aspartate 95 each coordinate Mg(2+). Serine 113 contacts 4-amino-2-methyl-5-(diphosphooxymethyl)pyrimidine. Residue 139-141 participates in 2-[(2R,5Z)-2-carboxy-4-methylthiazol-5(2H)-ylidene]ethyl phosphate binding; that stretch reads TPS. Lysine 142 is a 4-amino-2-methyl-5-(diphosphooxymethyl)pyrimidine binding site. 2-[(2R,5Z)-2-carboxy-4-methylthiazol-5(2H)-ylidene]ethyl phosphate is bound by residues glycine 171 and 191–192; that span reads IS.

Belongs to the thiamine-phosphate synthase family. It depends on Mg(2+) as a cofactor.

It catalyses the reaction 2-[(2R,5Z)-2-carboxy-4-methylthiazol-5(2H)-ylidene]ethyl phosphate + 4-amino-2-methyl-5-(diphosphooxymethyl)pyrimidine + 2 H(+) = thiamine phosphate + CO2 + diphosphate. The enzyme catalyses 2-(2-carboxy-4-methylthiazol-5-yl)ethyl phosphate + 4-amino-2-methyl-5-(diphosphooxymethyl)pyrimidine + 2 H(+) = thiamine phosphate + CO2 + diphosphate. The catalysed reaction is 4-methyl-5-(2-phosphooxyethyl)-thiazole + 4-amino-2-methyl-5-(diphosphooxymethyl)pyrimidine + H(+) = thiamine phosphate + diphosphate. It functions in the pathway cofactor biosynthesis; thiamine diphosphate biosynthesis; thiamine phosphate from 4-amino-2-methyl-5-diphosphomethylpyrimidine and 4-methyl-5-(2-phosphoethyl)-thiazole: step 1/1. Condenses 4-methyl-5-(beta-hydroxyethyl)thiazole monophosphate (THZ-P) and 2-methyl-4-amino-5-hydroxymethyl pyrimidine pyrophosphate (HMP-PP) to form thiamine monophosphate (TMP). In Staphylococcus aureus (strain MRSA252), this protein is Thiamine-phosphate synthase.